A 281-amino-acid polypeptide reads, in one-letter code: 2-dehydro-3-deoxyphosphooctonate aldolase (281 aa).

This sequence belongs to the KdsA family.

The protein resides in the cytoplasm. The catalysed reaction is D-arabinose 5-phosphate + phosphoenolpyruvate + H2O = 3-deoxy-alpha-D-manno-2-octulosonate-8-phosphate + phosphate. Its pathway is carbohydrate biosynthesis; 3-deoxy-D-manno-octulosonate biosynthesis; 3-deoxy-D-manno-octulosonate from D-ribulose 5-phosphate: step 2/3. It functions in the pathway bacterial outer membrane biogenesis; lipopolysaccharide biosynthesis. This chain is 2-dehydro-3-deoxyphosphooctonate aldolase, found in Pseudomonas entomophila (strain L48).